A 190-amino-acid chain; its full sequence is Small ribosomal subunit protein eS7 (190 aa).

Belongs to the eukaryotic ribosomal protein eS7 family.

This chain is Small ribosomal subunit protein eS7 (RpS7), found in Manduca sexta (Tobacco hawkmoth).